The primary structure comprises 254 residues: Alcohol dehydrogenase (254 aa).

Residue 10 to 33 (FVAGLGGIGFDTSREIVKSGPKNL) coordinates NAD(+). Substrate is bound at residue S138. Residue Y151 is the Proton acceptor of the active site.

This sequence belongs to the short-chain dehydrogenases/reductases (SDR) family. Homodimer.

The enzyme catalyses a primary alcohol + NAD(+) = an aldehyde + NADH + H(+). It catalyses the reaction a secondary alcohol + NAD(+) = a ketone + NADH + H(+). This chain is Alcohol dehydrogenase (Adh), found in Drosophila mayaguana (Fruit fly).